The primary structure comprises 853 residues: Wolframin (853 aa).

Positions lysine 139–glutamate 179 are disordered. The span at lysine 144–arginine 157 shows a compositional bias: basic residues. Acidic residues predominate over residues glycine 169–glutamate 179. The next 10 helical transmembrane spans lie at methionine 238–valine 258, serine 259–tryptophan 279, leucine 285–leucine 305, leucine 347–tryptophan 367, leucine 373–serine 393, phenylalanine 446–alanine 466, glycine 473–alanine 493, isoleucine 513–isoleucine 533, tryptophan 545–asparagine 565, and isoleucine 572–methionine 592. Residues asparagine 694 and asparagine 769 are each glycosylated (N-linked (GlcNAc...) asparagine).

As to expression, detected in adult brain.

It localises to the membrane. It is found in the endoplasmic reticulum. The protein resides in the mitochondrion. Participates in the regulation of cellular Ca(2+) homeostasis, at least partly, by modulating the filling state of the endoplasmic reticulum Ca(2+) store. In neurons and glial cells, has a role in maintaining neuronal function and integrity during aging. The chain is Wolframin from Drosophila melanogaster (Fruit fly).